The following is a 114-amino-acid chain: uncharacterized protein (114 aa).

This is an uncharacterized protein from Saccharomyces cerevisiae (strain ATCC 204508 / S288c) (Baker's yeast).